The sequence spans 528 residues: Sensory rhodopsin I transducer (528 aa).

A run of 2 helical transmembrane segments spans residues 11 to 31 and 35 to 55; these read GAKL…VGVV and VAST…INAA. 2 consecutive HAMP domains span residues 55-107 and 142-195; these read AETV…DRLS and TAYQ…ETIE. One can recognise a Methyl-accepting transducer domain in the interval 214 to 455; sequence TSRRVQQEVD…ATADSIADVT (242 aa). Glutamate methyl ester (Glu) is present on Glu259.

It belongs to the methyl-accepting chemotaxis (MCP) protein family. In terms of assembly, interacts with Sop1.

Its subcellular location is the cell membrane. In terms of biological role, transduces signals from the phototaxis receptor sensory rhodopsin I (Sop1). In Haloarcula marismortui (strain ATCC 43049 / DSM 3752 / JCM 8966 / VKM B-1809) (Halobacterium marismortui), this protein is Sensory rhodopsin I transducer (htr1).